Reading from the N-terminus, the 555-residue chain is HERV-H_2q24.1 provirus ancestral Env polyprotein (555 aa).

Positions 1–35 are cleaved as a signal peptide; it reads MILAGRAPSNTSTLMKFYSLLLYSLLFSFPFLYHP. Residues 36 to 515 lie on the Extracellular side of the membrane; the sequence is LPLPSYLHHT…WALSNWMSWV (480 aa). The N-linked (GlcNAc...) asparagine glycan is linked to asparagine 47. The CXXC motif lies at 64-67; it reads CWLC. N-linked (GlcNAc...) asparagine glycans are attached at residues asparagine 222, asparagine 265, asparagine 283, asparagine 352, and asparagine 370. The fusion peptide stretch occupies residues 388-408; the sequence is VIPLIPLMVGLGLSASTIALS. N-linked (GlcNAc...) asparagine glycosylation is present at asparagine 475. Residues 516–536 form a helical membrane-spanning segment; it reads LPILSPLIPIFLLLLFGPCIF. Topologically, residues 537-555 are cytoplasmic; it reads HLVSQFIQNRIQAITNHSI.

The protein belongs to the gamma type-C retroviral envelope protein family. HERV class-I H env subfamily. The surface (SU) and transmembrane (TM) proteins form a heterodimer. SU and TM are attached by noncovalent interactions or by a labile interchain disulfide bond. Specific enzymatic cleavages in vivo yield the mature SU and TM proteins. As to expression, low expression in testis.

Its subcellular location is the virion. The protein resides in the cell membrane. Its function is as follows. Retroviral envelope proteins mediate receptor recognition and membrane fusion during early infection. Endogenous envelope proteins may have kept, lost or modified their original function during evolution. This endogenous envelope protein has lost its original fusogenic properties. In terms of biological role, SU mediates receptor recognition. Functionally, TM anchors the envelope heterodimer to the viral membrane through one transmembrane domain. The other hydrophobic domain, called fusion peptide, mediates fusion of the viral membrane with the target cell membrane. The sequence is that of HERV-H_2q24.1 provirus ancestral Env polyprotein from Homo sapiens (Human).